The chain runs to 466 residues: MAKTLYEKVWDNHIVFAGEGEAPIIYVDRHLVHEVTSPQAFSGLKVAGRKLRAPEKTFATMDHNTSTTSASLDALSPMARTQVETLERNCKEFGVRLYDIHHKNQGIVHVMGPELGITLPGTVIVCGDSHTATHGAFGALAFGIGTSEVEHVMATQTLRQLKAKTMKIEVRGKVADGITAKDIVLAIIGKIGMDGGTGYVVEFCGEAIEALSMEGRMTVCNMAIEMGAKAGMIAPDTTTAEYLEGREFAPKGASWEQAVEAWSQLKTDADAVFDATVVIEAKDIAPQLTWGTNPGQVVAIDQLVPNPLDATNPTVRTSIENALQYVDLTAGTLMTDVSINKVFIGSCTNSRIEDLRAAAVHAKGRKVADGVKAIVVPGSGLVKEQAEAEGLDKIFLEAGFEWRLPGCSMCLAMNDDKLEVGDRCASTSNRNFEGRQGRGSRTHLVSPAMAAAAAVAGHFVDIRKPY.

Positions 347, 407, and 410 each coordinate [4Fe-4S] cluster.

It belongs to the aconitase/IPM isomerase family. LeuC type 1 subfamily. In terms of assembly, heterodimer of LeuC and LeuD. Requires [4Fe-4S] cluster as cofactor.

It catalyses the reaction (2R,3S)-3-isopropylmalate = (2S)-2-isopropylmalate. Its pathway is amino-acid biosynthesis; L-leucine biosynthesis; L-leucine from 3-methyl-2-oxobutanoate: step 2/4. Its function is as follows. Catalyzes the isomerization between 2-isopropylmalate and 3-isopropylmalate, via the formation of 2-isopropylmaleate. The protein is 3-isopropylmalate dehydratase large subunit of Shewanella halifaxensis (strain HAW-EB4).